The following is a 1242-amino-acid chain: Myosin-16 (1242 aa).

The Myosin N-terminal SH3-like domain occupies 6–55; that stretch reads MVDSHVWVEDPERAWIDGVVLNIKGEEAEIKTNDGRDVIANLSRLYPKDT. In terms of domain architecture, Myosin motor spans 60-729; that stretch reads EGVEDMTRLS…QMAELDAHRT (670 aa). ATP contacts are provided by residues 154–161 and 207–215; these read GESGSGKT and NNNSSRFGK. Actin-binding stretches follow at residues 493 to 527, 529 to 552, 587 to 610, and 610 to 632; these read LIEKKPGGIIALLDEACMLPKSTPETFSEKLYHTF, DHKRFMKPKLTRSDFTLVHYAGDV, FPPLPKESSKSKFSSIGARFKLQL, and LQQLMETLNSTEPHYIRCVKPNN. IQ domains lie at 732 to 761, 755 to 784, 780 to 809, 803 to 832, 828 to 857, and 851 to 880; these read LGESARMIQGQVRTRLTRERFVLMRRASVN, MRRASVNIQANWRGNIARKISKEMRREEAA, REEAAIKIQKNLRRQIAKKDYGKTKSSALT, TKSSALTLQSGVRTMAARHEFRYKLTTRAA, TTRAATVIQAYWRGYSAISDYKKLKRVSLL, and LKRVSLLCKSNLRGRIARKQLGQSKQADRK. Disordered stretches follow at residues 869-893 and 908-1042; these read KQLGQSKQADRKEETEKERKVELSN and EQSD…ERKT. Basic and acidic residues predominate over residues 876 to 893; it reads QADRKEETEKERKVELSN. Repeat copies occupy residues 876–908, 909–940, 941–965, 966–997, 998–1029, and 1030–1061. Positions 876-1061 are 6 X 33 AA repeats of Q-S-D-D-x-E-E-x(2)-H-x-R-K-x-K-x(2)-I-x(2)-E-D-G-x(3)-S-x-V-x-H-S-x; that stretch reads QADRKEETEK…IQKSFVTCSE (186 aa). Over residues 948–966 the composition is skewed to basic and acidic residues; that stretch reads GHERKTKLSIESEDGHSDQ. Residues 1079-1142 are a coiled coil; the sequence is DTEIESLTAE…QLQDSLNRLL (64 aa). The interval 1175–1242 is disordered; it reads DLADSSENSE…DKEGGFEDYF (68 aa). The span at 1179–1191 shows a compositional bias: low complexity; that stretch reads SSENSEASSSDSD. Positions 1199–1224 are enriched in polar residues; that stretch reads PSSDNFSTFNPNQLQVIVQDLSTTEA. Positions 1225–1242 are enriched in basic and acidic residues; that stretch reads KGTESYDSDKEGGFEDYF.

The protein belongs to the TRAFAC class myosin-kinesin ATPase superfamily. Myosin family. Plant myosin class XI subfamily. In terms of assembly, homodimer. Expressed in flowers and leaves.

The protein localises to the cytoplasm. Its function is as follows. Myosin heavy chain that is required for the cell cycle-regulated transport of various organelles and proteins for their segregation. Functions by binding with its tail domain to receptor proteins on organelles and exerting force with its N-terminal motor domain against actin filaments, thereby transporting its cargo along polarized actin cables. This chain is Myosin-16 (XI-J), found in Arabidopsis thaliana (Mouse-ear cress).